Reading from the N-terminus, the 271-residue chain is Co-chaperone protein DjlA (271 aa).

Topologically, residues 1-6 (MQYWGK) are periplasmic. A helical transmembrane segment spans residues 7–31 (IIGVAVALLMGGGFWGVVLGLLIGH). At 32 to 271 (MFDKARSRKM…ELIKQQKGFK (240 aa)) the chain is on the cytoplasmic side. The region spanning 205–271 (DACNVLGVKP…ELIKQQKGFK (67 aa)) is the J domain.

Homodimer.

Its subcellular location is the cell inner membrane. In terms of biological role, regulatory DnaK co-chaperone. Direct interaction between DnaK and DjlA is needed for the induction of the wcaABCDE operon, involved in the synthesis of a colanic acid polysaccharide capsule, possibly through activation of the RcsB/RcsC phosphotransfer signaling pathway. The colanic acid capsule may help the bacterium survive conditions outside the host. In Escherichia coli (strain K12), this protein is Co-chaperone protein DjlA.